The chain runs to 121 residues: MNEKIKLVEAAQMRADIPEIHPGDTLKVHVKVVEGDKERLQLFQGILISIRGVGMSKTITVRKISHGVGVERIIPLHSPIIEKIEVVKRGKVRRAKLFYMRNRTGKAAMKIKEKTTNSEMA.

Belongs to the bacterial ribosomal protein bL19 family.

Functionally, this protein is located at the 30S-50S ribosomal subunit interface and may play a role in the structure and function of the aminoacyl-tRNA binding site. The polypeptide is Large ribosomal subunit protein bL19 (Chloroherpeton thalassium (strain ATCC 35110 / GB-78)).